The following is a 509-amino-acid chain: Bifunctional pantoate ligase/cytidylate kinase (509 aa).

The pantoate--beta-alanine ligase stretch occupies residues methionine 1 to valine 275. Methionine 29–histidine 36 provides a ligand contact to ATP. Catalysis depends on histidine 36, which acts as the Proton donor. Glutamine 61 is a binding site for (R)-pantoate. Glutamine 61 serves as a coordination point for beta-alanine. Glycine 149–aspartate 152 serves as a coordination point for ATP. Glutamine 155 lines the (R)-pantoate pocket. An ATP-binding site is contributed by leucine 186 to arginine 189. The interval phenylalanine 276–lysine 509 is cytidylate kinase.

In the N-terminal section; belongs to the pantothenate synthetase family. This sequence in the C-terminal section; belongs to the cytidylate kinase family. Type 1 subfamily.

Its subcellular location is the cytoplasm. It catalyses the reaction (R)-pantoate + beta-alanine + ATP = (R)-pantothenate + AMP + diphosphate + H(+). It carries out the reaction CMP + ATP = CDP + ADP. The catalysed reaction is dCMP + ATP = dCDP + ADP. It functions in the pathway cofactor biosynthesis; (R)-pantothenate biosynthesis; (R)-pantothenate from (R)-pantoate and beta-alanine: step 1/1. In terms of biological role, catalyzes the condensation of pantoate with beta-alanine in an ATP-dependent reaction via a pantoyl-adenylate intermediate. Functionally, catalyzes the transfer of a phosphate group from ATP to either CMP or dCMP to form CDP or dCDP and ADP, respectively. This is Bifunctional pantoate ligase/cytidylate kinase from Prochlorococcus marinus (strain AS9601).